A 473-amino-acid polypeptide reads, in one-letter code: Adenosylhomocysteinase (473 aa).

Substrate is bound by residues Thr64, Asp139, and Glu199. 200 to 202 (TTT) contributes to the NAD(+) binding site. Substrate is bound by residues Lys229 and Asp233. Residues Asn234, 263–268 (GYGDVG), Glu286, Asn321, 342–344 (IGH), and Asn387 each bind NAD(+).

The protein belongs to the adenosylhomocysteinase family. It depends on NAD(+) as a cofactor.

The protein resides in the cytoplasm. The catalysed reaction is S-adenosyl-L-homocysteine + H2O = L-homocysteine + adenosine. It functions in the pathway amino-acid biosynthesis; L-homocysteine biosynthesis; L-homocysteine from S-adenosyl-L-homocysteine: step 1/1. Its function is as follows. May play a key role in the regulation of the intracellular concentration of adenosylhomocysteine. The chain is Adenosylhomocysteinase from Paraburkholderia xenovorans (strain LB400).